A 117-amino-acid polypeptide reads, in one-letter code: Carboxysome shell protein CcmK4 (117 aa).

Residues 5 to 91 form the BMC domain; the sequence is AVGSLETKGF…PHENVECVLP (87 aa).

It belongs to the bacterial microcompartments protein family. CcmK subfamily. As to quaternary structure, crystallizes as a homohexamer. Interacts stably with CcmK3, forming heterohexamers that can make dodecamers. Heterohexamers have a 1:2 CcmK3:CcmK4 stoichiometry. Upon expression in E.coli forms large aggregates.

Its subcellular location is the carboxysome. A probably essential, minor shell protein of the carboxysome, a polyhedral inclusion where RuBisCO (ribulose bisphosphate carboxylase, rbcL-rbcS) is sequestered. Hexamers form sheets that form the facets of the polyhedral carboxysome. In PCC 7418 there are several CcmK paralogs with presumably functional differences. This subunit can probably make both homohexamers and heterohexamers with CcmK3. Both hexamers can also make dodecamers, formation depends on buffer conditions. This Halothece sp. (strain PCC 7418) (Synechococcus sp. (strain PCC 7418)) protein is Carboxysome shell protein CcmK4.